The sequence spans 455 residues: Retinoic acid receptor beta (455 aa).

Residues 1 to 87 (MTTSGHACPV…PLPPPRVYKP (87 aa)) form a modulating region. The segment at 47-78 (HPPPSGCSTPSPATIETQSTSSEELVPSPPSP) is disordered. Over residues 53–66 (CSTPSPATIETQST) the composition is skewed to polar residues. S77 carries the post-translational modification Phosphoserine. NR C4-type zinc fingers lie at residues 88–108 (CFVC…CEGC) and 124–148 (CHRD…LQKC). Residues 88–153 (CFVCQDKSSG…RLQKCFEVGM (66 aa)) constitute a DNA-binding region (nuclear receptor). Positions 154 to 182 (SKESVRNDRNKKKKETSKQECTESYEMTA) are hinge. In terms of domain architecture, NR LBD spans 183-417 (ELDDLTEKIR…PLIQEMLENS (235 aa)). The disordered stretch occupies residues 415–455 (ENSEGHEPLTPSSSGNTAEHSPSISPSSVENSGVSQSPLVQ). Polar residues predominate over residues 424 to 434 (TPSSSGNTAEH). Low complexity predominate over residues 435–455 (SPSISPSSVENSGVSQSPLVQ).

This sequence belongs to the nuclear hormone receptor family. NR1 subfamily. Homodimer. Heterodimer; with a RXR molecule. Binds DNA preferentially as a RAR/RXR heterodimer. Heterodimerizes (via NR LBD) with RXRA. Interacts weakly with NCOR2. In terms of tissue distribution, expressed in aortic endothelial cells (at protein level).

It localises to the nucleus. The protein resides in the cytoplasm. Its function is as follows. Receptor for retinoic acid. Retinoic acid receptors bind as heterodimers to their target response elements in response to their ligands, all-trans or 9-cis retinoic acid, and regulate gene expression in various biological processes. The RXR/RAR heterodimers bind to the retinoic acid response elements (RARE) composed of tandem 5'-AGGTCA-3' sites known as DR1-DR5. In the absence or presence of hormone ligand, acts mainly as an activator of gene expression due to weak binding to corepressors. The RXRA/RARB heterodimer can act as a repressor on the DR1 element and as an activator on the DR5 element. In concert with RARG, required for skeletal growth, matrix homeostasis and growth plate function. The protein is Retinoic acid receptor beta (RARB) of Homo sapiens (Human).